A 379-amino-acid polypeptide reads, in one-letter code: Cytochrome b (379 aa).

Transmembrane regions (helical) follow at residues 33-53 (FGSL…FLAM), 77-98 (WLIR…FIHV), 113-133 (WNIG…GYVL), and 178-198 (FFAF…VHLL). Heme b-binding residues include H83 and H97. 2 residues coordinate heme b: H182 and H196. Residue H201 coordinates a ubiquinone. 4 helical membrane-spanning segments follow: residues 226-246 (TKDL…ALFF), 288-308 (LGGV…PLLN), 320-340 (VTQV…WIGG), and 347-367 (FTTI…ILIP).

This sequence belongs to the cytochrome b family. The cytochrome bc1 complex contains 11 subunits: 3 respiratory subunits (MT-CYB, CYC1 and UQCRFS1), 2 core proteins (UQCRC1 and UQCRC2) and 6 low-molecular weight proteins (UQCRH/QCR6, UQCRB/QCR7, UQCRQ/QCR8, UQCR10/QCR9, UQCR11/QCR10 and a cleavage product of UQCRFS1). This cytochrome bc1 complex then forms a dimer. Requires heme b as cofactor.

It localises to the mitochondrion inner membrane. Component of the ubiquinol-cytochrome c reductase complex (complex III or cytochrome b-c1 complex) that is part of the mitochondrial respiratory chain. The b-c1 complex mediates electron transfer from ubiquinol to cytochrome c. Contributes to the generation of a proton gradient across the mitochondrial membrane that is then used for ATP synthesis. The polypeptide is Cytochrome b (MT-CYB) (Akodon paranaensis (Parana grass mouse)).